Reading from the N-terminus, the 192-residue chain is Pyruvate kinase (192 aa).

R41 serves as a coordination point for substrate. K(+) is bound by residues N43, S45, D75, and T76. 43-46 (NFSH) serves as a coordination point for ATP.

This sequence belongs to the pyruvate kinase family. Requires Mg(2+) as cofactor. It depends on K(+) as a cofactor.

The enzyme catalyses pyruvate + ATP = phosphoenolpyruvate + ADP + H(+). Its pathway is carbohydrate degradation; glycolysis; pyruvate from D-glyceraldehyde 3-phosphate: step 5/5. The polypeptide is Pyruvate kinase (pyk) (Spiroplasma citri).